The following is a 189-amino-acid chain: GTPase KRas (189 aa).

Methionine 1 carries the N-acetylmethionine modification. Residue threonine 2 is modified to N-acetylthreonine; in GTPase KRas, N-terminally processed. Residues 10 to 18 (GAGGVGKSA), 29 to 35 (VDEYDPT), and 59 to 60 (AG) contribute to the GTP site. An Effector region motif is present at residues 32-40 (YDPTIEDSY). Lysine 104 is subject to N6-acetyllysine. 116 to 119 (NKCD) contributes to the GTP binding site. Positions 166–185 (YRLKKISKEEKTPGCVKIKK) are hypervariable region. Lysine 170 is covalently cross-linked (Glycyl lysine isopeptide (Lys-Gly) (interchain with G-Cter in ubiquitin)). Cysteine 180 is lipidated: S-palmitoyl cysteine. Residues lysine 182, lysine 184, and lysine 185 are each lipidated (N6-palmitoyl lysine). Position 186 is a cysteine methyl ester (cysteine 186). Cysteine 186 is lipidated: S-farnesyl cysteine. Positions 187-189 (VIM) are cleaved as a propeptide — removed in mature form.

Belongs to the small GTPase superfamily. Ras family. Interacts with PHLPP. Interacts (active GTP-bound form preferentially) with RGS14. Interacts (when farnesylated) with PDE6D; this promotes dissociation from the cell membrane. Interacts with SOS1. Interacts (when farnesylated) with GPR31. Interacts with RAP1GDS1. Interacts (active GTP-bound form) with both SHOC2 and PP1c (all isoforms) to form a tertiary complex; SHOC2 and PP1c preferably bind M-Ras/MRAS, but they also bind K-Ras/KRAS, N-Ras/NRAS and H-Ras/HRAS. Interacts (GTP-bound form) with MAPKAP1/SIN1; inhibiting K-Ras/KRAS activity. In terms of assembly, interacts (when farnesylated) with GPR31. In terms of processing, acetylation at Lys-104 prevents interaction with guanine nucleotide exchange factors (GEFs). Ubiquitinated by the BCR(LZTR1) E3 ubiquitin ligase complex at Lys-170 in a non-degradative manner, leading to inhibit Ras signaling by decreasing Ras association with membranes. Post-translationally, palmitoylated at Lys-182, Lys-184 and Lys-185. Lysine-depalmitoylation by SIRT2 promotes its localization to endomembranes in endocytic pathways.

It is found in the cell membrane. The protein resides in the endomembrane system. Its subcellular location is the cytoplasm. The protein localises to the cytosol. The enzyme catalyses GTP + H2O = GDP + phosphate + H(+). Its activity is regulated as follows. Alternates between an inactive form bound to GDP and an active form bound to GTP. Activated by a guanine nucleotide-exchange factor (GEF) and inactivated by a GTPase-activating protein (GAP). Interaction with SOS1 promotes exchange of bound GDP to GTP. In terms of biological role, ras proteins bind GDP/GTP and possess intrinsic GTPase activity. Plays an important role in the regulation of cell proliferation. Plays a role in promoting oncogenic events by inducing transcriptional silencing of tumor suppressor genes (TSGs) in colorectal cancer (CRC) cells in a ZNF304-dependent manner. The polypeptide is GTPase KRas (Kras) (Rattus norvegicus (Rat)).